A 339-amino-acid chain; its full sequence is Phenylalanine--tRNA ligase alpha subunit (339 aa).

Residue E250 coordinates Mg(2+).

This sequence belongs to the class-II aminoacyl-tRNA synthetase family. Phe-tRNA synthetase alpha subunit type 1 subfamily. Tetramer of two alpha and two beta subunits. It depends on Mg(2+) as a cofactor.

The protein resides in the cytoplasm. The catalysed reaction is tRNA(Phe) + L-phenylalanine + ATP = L-phenylalanyl-tRNA(Phe) + AMP + diphosphate + H(+). This is Phenylalanine--tRNA ligase alpha subunit from Christiangramia forsetii (strain DSM 17595 / CGMCC 1.15422 / KT0803) (Gramella forsetii).